The following is a 458-amino-acid chain: MLDATPKEIVERKALRINPAKTCQPVGAMYAALGIHNCLPHSHGSQGCCSYHRTVLSRHFKEPAMASTSSFTEGASVFGGGSNIKTAVKNIFSLYNPDIIAVHTTCLSETLGDDLPTYISQMEDAGSIPEGKLVIHTNTPSYVGSHVTGFANMVQGIVNYLSENTGAKNGKINVIPGFVGPADMREIKRLFEAMDIPYIMFPDTSGVLDGPTTGEYKMYPEGGTKIEDLKDTGNSDLTLSLGSYASDLGAKTLEKKCKVPFKTLRTPIGVSATDEFIMALSEATGKEVPASIEEERGQLIDLMIDAQQYLQGKKVALLGDPDEIIALSKFIIELGAIPKYVVTGTPGMKFQKEIDAMLAEAGIEGSKVKVEGDFFDVHQWIKNEGVDLLISNTYGKFIAREENIPFVRFGFPIMDRYGHYYNPKVGYKGAIRLVEEITNVILDKIERECTEEDFEVVR.

[8Fe-7S] cluster is bound by residues Cys23, Cys48, Cys106, and Ser141.

This sequence belongs to the NifD/NifK/NifE/NifN family. In terms of assembly, tetramer of two alpha and two beta chains. Forms complex with the iron protein (nitrogenase component 2). [8Fe-7S] cluster serves as cofactor.

The catalysed reaction is N2 + 8 reduced [2Fe-2S]-[ferredoxin] + 16 ATP + 16 H2O = H2 + 8 oxidized [2Fe-2S]-[ferredoxin] + 2 NH4(+) + 16 ADP + 16 phosphate + 6 H(+). This molybdenum-iron protein is part of the nitrogenase complex that catalyzes the key enzymatic reactions in nitrogen fixation. This chain is Nitrogenase molybdenum-iron protein beta chain (nifK), found in Clostridium pasteurianum.